Reading from the N-terminus, the 303-residue chain is HTH-type transcriptional regulator LinR (303 aa).

Residues 6-63 (LDFRHLVLLDALLKRHSVSAAARELDLPQPTASHGLARLRKALGDPLLVRARDGMEPT) enclose the HTH lysR-type domain. Positions 23–42 (VSAAARELDLPQPTASHGLA) form a DNA-binding region, H-T-H motif.

This sequence belongs to the LysR transcriptional regulatory family.

Positively regulates the transcription of the linD and linE genes that are involved in gamma-hexachlorocyclohexane (gamma-HCH or lindane) degradation. This degradation pathway allows S.japonicum UT26 to grow on gamma-HCH as the sole source of carbon and energy. The sequence is that of HTH-type transcriptional regulator LinR (linR) from Sphingobium indicum (strain DSM 16413 / CCM 7287 / MTCC 6362 / UT26 / NBRC 101211 / UT26S) (Sphingobium japonicum).